The sequence spans 65 residues: Kassorin-M (65 aa).

The signal sequence occupies residues 1–22 (MLTLKKSMLLLFFLGMVSFSLA). The propeptide occupies 23–51 (DDKREDEAEEGEDKRADEGEEKRAAEKKR). Residues 24–45 (DKREDEAEEGEDKRADEGEEKR) form a disordered region. At leucine 64 the chain carries Leucine amide.

This sequence belongs to the frog skin active peptide (FSAP) family. Brevinin subfamily. As to expression, expressed by the skin glands.

The protein resides in the secreted. Induces contraction of smooth muscle in isolated guinea pig urinary bladder (EC50=4.66 nM). Has no antimicrobial activity against the Gram-positive bacterium S.aureus, the Gram-negative bacterium E.coli and the yeast C.albicans. Elicits histamine release from rat peritoneal mast cells. In Phlyctimantis maculatus (Red-legged running frog), this protein is Kassorin-M.